Here is a 201-residue protein sequence, read N- to C-terminus: 3-isopropylmalate dehydratase small subunit (201 aa).

Belongs to the LeuD family. LeuD type 1 subfamily. In terms of assembly, heterodimer of LeuC and LeuD.

It catalyses the reaction (2R,3S)-3-isopropylmalate = (2S)-2-isopropylmalate. It functions in the pathway amino-acid biosynthesis; L-leucine biosynthesis; L-leucine from 3-methyl-2-oxobutanoate: step 2/4. Its function is as follows. Catalyzes the isomerization between 2-isopropylmalate and 3-isopropylmalate, via the formation of 2-isopropylmaleate. This is 3-isopropylmalate dehydratase small subunit from Shewanella halifaxensis (strain HAW-EB4).